Consider the following 211-residue polypeptide: High frequency lysogenization protein HflD homolog (211 aa).

It belongs to the HflD family.

It localises to the cytoplasm. Its subcellular location is the cell membrane. The sequence is that of High frequency lysogenization protein HflD homolog from Buchnera aphidicola subsp. Acyrthosiphon pisum (strain 5A).